The sequence spans 98 residues: NADH-ubiquinone oxidoreductase chain 4L (98 aa).

3 consecutive transmembrane segments (helical) span residues 1 to 21 (MSLVYMNIMTAFMVSLAGLLM), 29 to 49 (SLLCLEGMMLSLFVMATLTIL), and 61 to 81 (IILLVFAACEAALGLSLLVMV).

Belongs to the complex I subunit 4L family. As to quaternary structure, core subunit of respiratory chain NADH dehydrogenase (Complex I) which is composed of 45 different subunits.

It is found in the mitochondrion inner membrane. It carries out the reaction a ubiquinone + NADH + 5 H(+)(in) = a ubiquinol + NAD(+) + 4 H(+)(out). In terms of biological role, core subunit of the mitochondrial membrane respiratory chain NADH dehydrogenase (Complex I) which catalyzes electron transfer from NADH through the respiratory chain, using ubiquinone as an electron acceptor. Part of the enzyme membrane arm which is embedded in the lipid bilayer and involved in proton translocation. The polypeptide is NADH-ubiquinone oxidoreductase chain 4L (MT-ND4L) (Rangifer tarandus (Reindeer)).